A 447-amino-acid chain; its full sequence is Phosphoglucosamine mutase (447 aa).

The active-site Phosphoserine intermediate is Ser100. Mg(2+) contacts are provided by Ser100, Asp239, Asp241, and Asp243. Ser100 carries the phosphoserine modification.

This sequence belongs to the phosphohexose mutase family. Mg(2+) serves as cofactor. Activated by phosphorylation.

It catalyses the reaction alpha-D-glucosamine 1-phosphate = D-glucosamine 6-phosphate. In terms of biological role, catalyzes the conversion of glucosamine-6-phosphate to glucosamine-1-phosphate. The chain is Phosphoglucosamine mutase from Caldanaerobacter subterraneus subsp. tengcongensis (strain DSM 15242 / JCM 11007 / NBRC 100824 / MB4) (Thermoanaerobacter tengcongensis).